Consider the following 376-residue polypeptide: Probable cysteine protease RDL3 (376 aa).

Residues 1–27 (MAISFRTLALLTLSVLLISISLGVVTA) form the signal peptide. A propeptide spans 28–126 (TESQRNEGEV…ERYQYKEGDV (99 aa)) (activation peptide). Residue N80 is glycosylated (N-linked (GlcNAc...) asparagine). Cystine bridges form between C149–C192 and C183–C226. The active site involves C152. N-linked (GlcNAc...) asparagine glycosylation occurs at N270. Cysteines 283 and 336 form a disulfide. Active-site residues include H290 and N311. N-linked (GlcNAc...) asparagine glycosylation is present at N349.

It belongs to the peptidase C1 family. As to expression, expressed in root hairs.

Functionally, probable thiol protease. The sequence is that of Probable cysteine protease RDL3 from Arabidopsis thaliana (Mouse-ear cress).